An 893-amino-acid chain; its full sequence is DNA mismatch repair protein MutS (893 aa).

ATP is bound at residue 638 to 645; it reads GPNMAGKS.

Belongs to the DNA mismatch repair MutS family.

Its function is as follows. This protein is involved in the repair of mismatches in DNA. It is possible that it carries out the mismatch recognition step. This protein has a weak ATPase activity. The polypeptide is DNA mismatch repair protein MutS (Lawsonia intracellularis (strain PHE/MN1-00)).